An 894-amino-acid polypeptide reads, in one-letter code: Myb-like protein K (894 aa).

The segment covering 93-139 has biased composition (low complexity); that stretch reads LQQQQQSPVTNVATNTPPTLQHSISSPSPNNFNNNNNANNQFLSPNS. Disordered stretches follow at residues 93-221, 299-353, 492-539, and 601-659; these read LQQQ…SASS, QVGN…QPIT, QQQQ…LEMI, and AATT…HWTS. Residues 140–149 are compositionally biased toward polar residues; sequence PQVAKSSPSQ. A compositionally biased stretch (low complexity) spans 150-221; sequence NNPSTPIANT…SQSLNSSASS (72 aa). Residues 300 to 309 show a composition bias toward polar residues; sequence VGNPMQQSND. Composition is skewed to low complexity over residues 310-353 and 492-527; these read MQPQ…QPIT and QQQQQHQMHQQHQMQPQQQQQQHQMHQQSPQQPQQM. Composition is skewed to basic and acidic residues over residues 611-640 and 649-659; these read GKEEKEKKKDKKDKDKDKDKDDDDKESKKD and ASKEKTSHWTS. The HTH myb-type domain maps to 649–704; the sequence is ASKEKTSHWTSEEHNKFLEAVQQFGIKDYHAIAKFVQTRNHHQVRTHVNTYLKNQK. The segment at residues 677–700 is a DNA-binding region (H-T-H motif); the sequence is YHAIAKFVQTRNHHQVRTHVNTYL. Residues 703–852 form a disordered region; the sequence is QKKAEAATSS…EYNSGFDSNS (150 aa). Composition is skewed to low complexity over residues 710 to 742, 751 to 805, and 815 to 845; these read TSSTQVSTPQQQLPIVGTPQQSVGTPQQQQPPI, QQQQ…QQPQ, and PPNNENNNNINNNLENTNNNDNGNNNNNEYN.

The protein localises to the nucleus. The protein is Myb-like protein K (mybK) of Dictyostelium discoideum (Social amoeba).